The chain runs to 463 residues: uncharacterized protein (463 aa).

12 helical membrane passes run Ile-17 to Ala-37, Leu-40 to Met-60, Trp-97 to Phe-117, Val-122 to Ala-142, Phe-153 to Ile-173, Gly-201 to Val-221, Ile-244 to Ile-264, Val-278 to Ser-298, Ala-335 to Ala-355, Val-357 to Leu-377, Leu-401 to Ala-421, and Ala-429 to Phe-449.

Belongs to the amino acid-polyamine-organocation (APC) superfamily.

Its subcellular location is the cell membrane. This is an uncharacterized protein from Bacillus subtilis (strain 168).